The sequence spans 437 residues: MNPLKIFCFLALVIAVASANKHGKNKDNAGPNSLKPTDWLSVEELQSMTAIDDITLQQLENMSVEDAERKIEKIYHLSQINHALEPSYVPSPSNVPVMLMKPNGQSQQTNHNELVEAAKQQPNFGDEEVTIFITGMPQTSSAVLKANKKLVQAYMQRYNGQQQPINGNKDYDYGSSQGNQGATSSEEDYSESWKNQKSTKGNLVIINLGSTLTNMKRFALLDVEQTGNMIGKTLVQLTNEVDVPQEIIHIVAQCIGAQVAGAAGRQYKRLTGHQLRRITALDPSKIFAKNRNALTGLARGDADFVDAIHTSTCGMGTRQRVGDVDFYVNGPASTAPGTNNVVEASMRATRYFAESLRPGNERNFPAVAANSLNQYENNEGNGKRAYMGIATDFDLEGDYILKVNPKSPFGKSAPAQKQRRYHGLHQSWKSGKNQNQE.

Residues 1–19 form the signal peptide; sequence MNPLKIFCFLALVIAVASA. 2 disordered regions span residues 161 to 194 and 405 to 437; these read QQQP…ESWK and PKSP…QNQE. Composition is skewed to polar residues over residues 174-184 and 427-437; these read GSSQGNQGATS and SWKSGKNQNQE.

It belongs to the AB hydrolase superfamily. Lipase family. In terms of tissue distribution, synthesized in the fat body and ovarian follicle cells and accumulate in the oocyte.

The protein localises to the secreted. In terms of biological role, vitellogenin is the major yolk protein of eggs where it is used as a food source during embryogenesis. The chain is Vitellogenin-1 (VG1-GAMMA) from Ceratitis capitata (Mediterranean fruit fly).